We begin with the raw amino-acid sequence, 148 residues long: 3-dehydroquinate dehydratase (148 aa).

The active-site Proton acceptor is Tyr23. Substrate contacts are provided by Asn74, His80, and Asp87. The active-site Proton donor is the His100. Substrate contacts are provided by residues 101–102 (IS) and Arg111.

Belongs to the type-II 3-dehydroquinase family. In terms of assembly, homododecamer.

The enzyme catalyses 3-dehydroquinate = 3-dehydroshikimate + H2O. It participates in metabolic intermediate biosynthesis; chorismate biosynthesis; chorismate from D-erythrose 4-phosphate and phosphoenolpyruvate: step 3/7. Catalyzes a trans-dehydration via an enolate intermediate. The protein is 3-dehydroquinate dehydratase of Thermoanaerobacter pseudethanolicus (strain ATCC 33223 / 39E) (Clostridium thermohydrosulfuricum).